The primary structure comprises 278 residues: Bifunctional protein FolD (278 aa).

Residues 163-165, serine 188, and valine 229 each bind NADP(+); that span reads GRS.

This sequence belongs to the tetrahydrofolate dehydrogenase/cyclohydrolase family. As to quaternary structure, homodimer.

It catalyses the reaction (6R)-5,10-methylene-5,6,7,8-tetrahydrofolate + NADP(+) = (6R)-5,10-methenyltetrahydrofolate + NADPH. The catalysed reaction is (6R)-5,10-methenyltetrahydrofolate + H2O = (6R)-10-formyltetrahydrofolate + H(+). The protein operates within one-carbon metabolism; tetrahydrofolate interconversion. In terms of biological role, catalyzes the oxidation of 5,10-methylenetetrahydrofolate to 5,10-methenyltetrahydrofolate and then the hydrolysis of 5,10-methenyltetrahydrofolate to 10-formyltetrahydrofolate. The sequence is that of Bifunctional protein FolD from Exiguobacterium sp. (strain ATCC BAA-1283 / AT1b).